Consider the following 444-residue polypeptide: GTPase Der (444 aa).

EngA-type G domains follow at residues Pro-3 to Glu-167 and Leu-180 to Gln-353. Residues Gly-9 to Ser-16, Asp-56 to Met-60, Asn-119 to Asp-122, Gly-186 to Ser-193, Asp-233 to Val-237, and Asn-298 to Asp-301 each bind GTP. The KH-like domain maps to Ile-354–His-438.

This sequence belongs to the TRAFAC class TrmE-Era-EngA-EngB-Septin-like GTPase superfamily. EngA (Der) GTPase family. Associates with the 50S ribosomal subunit.

Functionally, GTPase that plays an essential role in the late steps of ribosome biogenesis. This is GTPase Der from Solidesulfovibrio magneticus (strain ATCC 700980 / DSM 13731 / RS-1) (Desulfovibrio magneticus).